A 423-amino-acid chain; its full sequence is E3 ubiquitin-protein ligase makorin-2 (423 aa).

C3H1-type zinc fingers lie at residues 2 to 29 and 31 to 58; these read STKQ…HDLN and SKPS…HIKP. A disordered region spans residues 59-90; it reads SSRGGGGGAPEDQAGGGGAGGGGAGIGGAGGG. Residues 61-90 are compositionally biased toward gly residues; sequence RGGGGGAPEDQAGGGGAGGGGAGIGGAGGG. Residues 162–189 form a C3H1-type 3 zinc finger; the sequence is QNLPQLCPYAANGHCFYEENCTYLHGDL. The tract at residues 190-219 is makorin-type Cys-His; sequence CEVCGLQVLHPHDSEQRRAHEKMCLAAFEA. Residues 235–289 form an RING-type zinc finger; sequence CSICMEVVVQKANPSDRRFGILSSCCHTFCLACIRKWRCTRTFSNTIIKSCPECR. The C3H1-type 4 zinc finger occupies 318-347; it reads GVSKKACKYFDQGRGSCPFGGKCLYLHAFP.

The protein localises to the cytoplasm. Its subcellular location is the nucleus. It catalyses the reaction S-ubiquitinyl-[E2 ubiquitin-conjugating enzyme]-L-cysteine + [acceptor protein]-L-lysine = [E2 ubiquitin-conjugating enzyme]-L-cysteine + N(6)-ubiquitinyl-[acceptor protein]-L-lysine.. The protein operates within protein modification; protein ubiquitination. Functionally, E3 ubiquitin ligase catalyzing the covalent attachment of ubiquitin moieties onto substrate proteins. Inhibits neurogenesis and axis formation during embryonic development by modulating the phosphatidylinositol 3-kinase (PI3K) pathway. Acts downstream of PI3K and akt1 to up-regulate gsk3b mRNA expression. The polypeptide is E3 ubiquitin-protein ligase makorin-2 (mkrn2) (Seriola quinqueradiata (Five-ray yellowtail)).